Reading from the N-terminus, the 474-residue chain is ATP synthase subunit beta (474 aa).

153–160 (GGAGVGKT) lines the ATP pocket.

Belongs to the ATPase alpha/beta chains family. F-type ATPases have 2 components, CF(1) - the catalytic core - and CF(0) - the membrane proton channel. CF(1) has five subunits: alpha(3), beta(3), gamma(1), delta(1), epsilon(1). CF(0) has three main subunits: a(1), b(2) and c(9-12). The alpha and beta chains form an alternating ring which encloses part of the gamma chain. CF(1) is attached to CF(0) by a central stalk formed by the gamma and epsilon chains, while a peripheral stalk is formed by the delta and b chains.

Its subcellular location is the cell inner membrane. It carries out the reaction ATP + H2O + 4 H(+)(in) = ADP + phosphate + 5 H(+)(out). Its function is as follows. Produces ATP from ADP in the presence of a proton gradient across the membrane. The catalytic sites are hosted primarily by the beta subunits. This Rickettsia prowazekii (strain Madrid E) protein is ATP synthase subunit beta.